Consider the following 89-residue polypeptide: Putative defensin-like protein 89 (89 aa).

The N-terminal stretch at 1-25 is a signal peptide; it reads MGFKNNLSLVSVMVFALILLPMISG. 4 cysteine pairs are disulfide-bonded: Cys-30/Cys-66, Cys-36/Cys-57, Cys-42/Cys-64, and Cys-46/Cys-65.

It belongs to the DEFL family.

It localises to the secreted. The polypeptide is Putative defensin-like protein 89 (Arabidopsis thaliana (Mouse-ear cress)).